The primary structure comprises 81 residues: Photosystem I iron-sulfur center (81 aa).

4Fe-4S ferredoxin-type domains follow at residues 2–31 (VHVV…MVPW) and 39–68 (IASS…IRVY). [4Fe-4S] cluster-binding residues include Cys-11, Cys-14, Cys-17, Cys-21, Cys-48, Cys-51, Cys-54, and Cys-58.

The eukaryotic PSI reaction center is composed of at least 11 subunits. Requires [4Fe-4S] cluster as cofactor.

The protein resides in the plastid. Its subcellular location is the chloroplast thylakoid membrane. The catalysed reaction is reduced [plastocyanin] + hnu + oxidized [2Fe-2S]-[ferredoxin] = oxidized [plastocyanin] + reduced [2Fe-2S]-[ferredoxin]. Functionally, apoprotein for the two 4Fe-4S centers FA and FB of photosystem I (PSI); essential for photochemical activity. FB is the terminal electron acceptor of PSI, donating electrons to ferredoxin. The C-terminus interacts with PsaA/B/D and helps assemble the protein into the PSI complex. Required for binding of PsaD and PsaE to PSI. PSI is a plastocyanin/cytochrome c6-ferredoxin oxidoreductase, converting photonic excitation into a charge separation, which transfers an electron from the donor P700 chlorophyll pair to the spectroscopically characterized acceptors A0, A1, FX, FA and FB in turn. The chain is Photosystem I iron-sulfur center from Cyanidium caldarium (Red alga).